The primary structure comprises 438 residues: Adenylosuccinate synthetase (438 aa).

Residues 13 to 19 (GDEGKGK) and 41 to 43 (GHT) each bind GTP. Aspartate 14 acts as the Proton acceptor in catalysis. Residues aspartate 14 and glycine 41 each contribute to the Mg(2+) site. Residues 14 to 17 (DEGK), 39 to 42 (NAGH), threonine 136, arginine 150, glutamine 231, threonine 246, and arginine 310 contribute to the IMP site. The active-site Proton donor is the histidine 42. 306–312 (STTGRRR) contributes to the substrate binding site. Residues arginine 312, 338–340 (KID), and 421–423 (STG) each bind GTP.

This sequence belongs to the adenylosuccinate synthetase family. In terms of assembly, homodimer. Requires Mg(2+) as cofactor.

The protein localises to the cytoplasm. The catalysed reaction is IMP + L-aspartate + GTP = N(6)-(1,2-dicarboxyethyl)-AMP + GDP + phosphate + 2 H(+). The protein operates within purine metabolism; AMP biosynthesis via de novo pathway; AMP from IMP: step 1/2. Functionally, plays an important role in the de novo pathway of purine nucleotide biosynthesis. Catalyzes the first committed step in the biosynthesis of AMP from IMP. The chain is Adenylosuccinate synthetase from Blochmanniella floridana.